The primary structure comprises 655 residues: Fructose-1,6-bisphosphatase class 3 (655 aa).

The protein belongs to the FBPase class 3 family. Mn(2+) serves as cofactor.

It carries out the reaction beta-D-fructose 1,6-bisphosphate + H2O = beta-D-fructose 6-phosphate + phosphate. Its pathway is carbohydrate biosynthesis; gluconeogenesis. The sequence is that of Fructose-1,6-bisphosphatase class 3 from Porphyromonas gingivalis (strain ATCC BAA-308 / W83).